Here is a 430-residue protein sequence, read N- to C-terminus: Forkhead box protein N2 (430 aa).

Residues methionine 1–valine 47 are disordered. A DNA-binding region (fork-head) is located at residues lysine 108–serine 204. 2 disordered regions span residues asparagine 299–serine 326 and proline 338–glutamine 391. The segment covering aspartate 355 to leucine 366 has biased composition (acidic residues). Over residues histidine 381–serine 390 the composition is skewed to basic and acidic residues.

Expressed in the developing eye from stage 23. Localized to the prospective retinal layer and a layer of cells lateral to the ventricular zone. At stage 29, expression extends to the branchial arches and the brain. At stage 33/34, expressed in the vagal ganglion. At stage 36, expression in the retina decreases. Not expressed in the eye lens.

The protein localises to the nucleus. This is Forkhead box protein N2 from Xenopus laevis (African clawed frog).